The following is a 265-amino-acid chain: MADS-box protein JOINTLESS (265 aa).

In terms of domain architecture, MADS-box spans 3–57 (REKIQIKKIDNSTARQVTFSKRRRGLFKKAEELSVLCDADVALIIFSSTGKLFDY). The region spanning 87 to 177 (QLVENSNYSR…RQQVMEISNN (91 aa)) is the K-box domain. Positions 196–232 (ENGFNNNNNEDGQSSESVTNPCNSIDPPPQDDDSSDT) are disordered. Polar residues predominate over residues 205-218 (EDGQSSESVTNPCN).

In terms of tissue distribution, widely expressed with highest levels in shoot tips and axillary buds. Also found in fully developed pedicels and flowers.

Its subcellular location is the nucleus. Its function is as follows. Putative transcription factor that coordinates gene expression underlying the differentiation of the pedicel abscission zone. May also be involved in the maintenance of the inflorescence meristem state. This is MADS-box protein JOINTLESS (J) from Solanum lycopersicum (Tomato).